The chain runs to 608 residues: Probable potassium transport system protein Kup (608 aa).

Transmembrane regions (helical) follow at residues 9–29 (LSGV…TSPL), 46–66 (PAAI…VVSV), 99–119 (TPVL…EVVI), 137–157 (PSLD…LFAI), 165–185 (VGKL…VLGL), 213–233 (TSFF…ALYA), 247–267 (WFVV…ALLL), 285–305 (ALLP…QAVI), 337–357 (IYIP…IMSF), 363–383 (LAAA…ILFC), 396–416 (LVAA…AANL), and 419–439 (IFSG…LMTS).

Belongs to the HAK/KUP transporter (TC 2.A.72) family.

It is found in the cell inner membrane. It catalyses the reaction K(+)(in) + H(+)(in) = K(+)(out) + H(+)(out). Transport of potassium into the cell. Likely operates as a K(+):H(+) symporter. In Aeromonas salmonicida (strain A449), this protein is Probable potassium transport system protein Kup.